The sequence spans 884 residues: Probable disease resistance protein At1g12290 (884 aa).

The stretch at 26 to 66 (LYYIQNIKENLTSLEEAMEDLKALRDDLLRKVQTAEEGGLQ) forms a coiled coil. The NB-ARC domain occupies 139–443 (AHPATRAVGE…CEGFIDGDEN (305 aa)). Residue 182–189 (GMGGVGKT) coordinates ATP. LRR repeat units lie at residues 519-540 (VVSRMSLVNNRIKEIHGSPECP), 541-563 (KLTTLFLQDNRHLVNISGEFFRS), 566-588 (RLVVLDLSWNVNLSGLPDQISEL), 590-612 (SLRYLDLSYSSIGRLPVGLLKLK), 613-635 (KLMHLNLESMLCLESVSGIDHLS), and 644-664 (NLRMWLTISLLEELERLENLE).

Belongs to the disease resistance NB-LRR family.

Its function is as follows. Probable disease resistance protein. The chain is Probable disease resistance protein At1g12290 from Arabidopsis thaliana (Mouse-ear cress).